A 267-amino-acid chain; its full sequence is MLYFIGLGLSIKHLTLEAIDALRDVEKIYVDTYTNIVPDFSLDKLVSLVGEEKEFVMAKREFLEGKNIHFIVEEASKKNIAILVPGDPFIATTHDAIRVEALRRGIKVKVINGLSIYSLAPSRTGLQAYKFGKTVTLVYPEYFKPYSTIETIYDNLDRNLHTLLLLDLKIEENKAMTIPEAVDILIDLDERGVLENIIGVGLAQLGSSMEKIVADRLADLKNYTYPPPPHSIIIVAKPHPIELDNLHYVCGLPEHIYRRYSVSKTYP.

S-adenosyl-L-methionine is bound by residues L9, D87, I90, 115-116 (SI), L166, L205, and H230.

It belongs to the diphthine synthase family. Homodimer.

The catalysed reaction is 2-[(3S)-amino-3-carboxypropyl]-L-histidyl-[translation elongation factor 2] + 3 S-adenosyl-L-methionine = diphthine-[translation elongation factor 2] + 3 S-adenosyl-L-homocysteine + 3 H(+). It functions in the pathway protein modification; peptidyl-diphthamide biosynthesis. In terms of biological role, S-adenosyl-L-methionine-dependent methyltransferase that catalyzes the trimethylation of the amino group of the modified target histidine residue in translation elongation factor 2 (EF-2), to form an intermediate called diphthine. The three successive methylation reactions represent the second step of diphthamide biosynthesis. This chain is Diphthine synthase, found in Staphylothermus marinus (strain ATCC 43588 / DSM 3639 / JCM 9404 / F1).